The primary structure comprises 361 residues: Phospho-N-acetylmuramoyl-pentapeptide-transferase (361 aa).

The next 10 membrane-spanning stretches (helical) occupy residues 28 to 48, 74 to 94, 99 to 119, 133 to 153, 168 to 188, 203 to 223, 236 to 256, 263 to 283, 288 to 308, and 338 to 358; these read LAII…IKFL, TMGG…LADL, IWIT…DDYA, SKLL…EYLD, LSLD…VGSS, VPIA…GNLI, TGEL…FLWF, VFMG…ISVI, IVLA…ILQV, and KVVI…LSSL.

Belongs to the glycosyltransferase 4 family. MraY subfamily. Requires Mg(2+) as cofactor.

Its subcellular location is the cell membrane. The enzyme catalyses UDP-N-acetyl-alpha-D-muramoyl-L-alanyl-gamma-D-glutamyl-meso-2,6-diaminopimeloyl-D-alanyl-D-alanine + di-trans,octa-cis-undecaprenyl phosphate = di-trans,octa-cis-undecaprenyl diphospho-N-acetyl-alpha-D-muramoyl-L-alanyl-D-glutamyl-meso-2,6-diaminopimeloyl-D-alanyl-D-alanine + UMP. Its pathway is cell wall biogenesis; peptidoglycan biosynthesis. Its function is as follows. Catalyzes the initial step of the lipid cycle reactions in the biosynthesis of the cell wall peptidoglycan: transfers peptidoglycan precursor phospho-MurNAc-pentapeptide from UDP-MurNAc-pentapeptide onto the lipid carrier undecaprenyl phosphate, yielding undecaprenyl-pyrophosphoryl-MurNAc-pentapeptide, known as lipid I. The polypeptide is Phospho-N-acetylmuramoyl-pentapeptide-transferase (Rickettsia montanensis).